Consider the following 67-residue polypeptide: UPF0434 protein Patl_1782 (67 aa).

The protein belongs to the UPF0434 family.

This Pseudoalteromonas atlantica (strain T6c / ATCC BAA-1087) protein is UPF0434 protein Patl_1782.